The primary structure comprises 245 residues: MLIIPAIDLKDGACVRLRQGLMEDATVFSDDPVAMAAKWVDGGCRRLHLVDLNGAFEGKPVNGEVVTAIARRYPDLPIQIGGGIRSLETIEHYVRAGVSYVIIGTKAVKQPEFVGEACRAFPGKVIVGLDAKDGFVATDGWAEVSEVQVIDLARRFEADGVSAIVYTDISKDGMMQGCNVEATAALANATRIPVIASGGIHNLGDIQKLLDARTPGIIGAITGRAIYEGTLDVAEAQALCDNFKA.

Asp8 acts as the Proton acceptor in catalysis. The active-site Proton donor is Asp130.

Belongs to the HisA/HisF family.

The protein resides in the cytoplasm. It catalyses the reaction 1-(5-phospho-beta-D-ribosyl)-5-[(5-phospho-beta-D-ribosylamino)methylideneamino]imidazole-4-carboxamide = 5-[(5-phospho-1-deoxy-D-ribulos-1-ylimino)methylamino]-1-(5-phospho-beta-D-ribosyl)imidazole-4-carboxamide. It functions in the pathway amino-acid biosynthesis; L-histidine biosynthesis; L-histidine from 5-phospho-alpha-D-ribose 1-diphosphate: step 4/9. This is 1-(5-phosphoribosyl)-5-[(5-phosphoribosylamino)methylideneamino] imidazole-4-carboxamide isomerase from Pseudomonas aeruginosa (strain LESB58).